We begin with the raw amino-acid sequence, 671 residues long: DNA ligase (671 aa).

Residues 31 to 35 (DAEYD), 80 to 81 (SL), and E110 contribute to the NAD(+) site. Residue K112 is the N6-AMP-lysine intermediate of the active site. NAD(+) is bound by residues R133, E167, K283, and K307. Residues C401, C404, C419, and C424 each coordinate Zn(2+). One can recognise a BRCT domain in the interval 587–671 (EEELVFAGKT…YLPDEGGLNE (85 aa)).

It belongs to the NAD-dependent DNA ligase family. LigA subfamily. The cofactor is Mg(2+). Requires Mn(2+) as cofactor.

It catalyses the reaction NAD(+) + (deoxyribonucleotide)n-3'-hydroxyl + 5'-phospho-(deoxyribonucleotide)m = (deoxyribonucleotide)n+m + AMP + beta-nicotinamide D-nucleotide.. DNA ligase that catalyzes the formation of phosphodiester linkages between 5'-phosphoryl and 3'-hydroxyl groups in double-stranded DNA using NAD as a coenzyme and as the energy source for the reaction. It is essential for DNA replication and repair of damaged DNA. This Listeria monocytogenes serotype 4a (strain HCC23) protein is DNA ligase.